Reading from the N-terminus, the 494-residue chain is Glutamyl-tRNA(Gln) amidotransferase subunit A (494 aa).

Active-site charge relay system residues include lysine 80 and serine 160. A disordered region spans residues 140–168 (GNVISPWRRPGDTAPLAPGGSSGGSSSAV). Serine 184 serves as the catalytic Acyl-ester intermediate.

It belongs to the amidase family. GatA subfamily. Heterotrimer of A, B and C subunits.

The catalysed reaction is L-glutamyl-tRNA(Gln) + L-glutamine + ATP + H2O = L-glutaminyl-tRNA(Gln) + L-glutamate + ADP + phosphate + H(+). In terms of biological role, allows the formation of correctly charged Gln-tRNA(Gln) through the transamidation of misacylated Glu-tRNA(Gln) in organisms which lack glutaminyl-tRNA synthetase. The reaction takes place in the presence of glutamine and ATP through an activated gamma-phospho-Glu-tRNA(Gln). The polypeptide is Glutamyl-tRNA(Gln) amidotransferase subunit A (Novosphingobium aromaticivorans (strain ATCC 700278 / DSM 12444 / CCUG 56034 / CIP 105152 / NBRC 16084 / F199)).